A 141-amino-acid polypeptide reads, in one-letter code: Transcription antitermination protein NusB (141 aa).

This sequence belongs to the NusB family.

In terms of biological role, involved in transcription antitermination. Required for transcription of ribosomal RNA (rRNA) genes. Binds specifically to the boxA antiterminator sequence of the ribosomal RNA (rrn) operons. The sequence is that of Transcription antitermination protein NusB from Neisseria meningitidis serogroup B (strain ATCC BAA-335 / MC58).